Reading from the N-terminus, the 62-residue chain is Large ribosomal subunit protein bL35 (62 aa).

The tract at residues 31–62 (HLAQNKTTKQKRQSRKSAQMHSSDLKRFKALI) is disordered. Residues 53–62 (SDLKRFKALI) show a composition bias toward basic and acidic residues.

The protein belongs to the bacterial ribosomal protein bL35 family.

This chain is Large ribosomal subunit protein bL35, found in Mycoplasmopsis agalactiae (strain NCTC 10123 / CIP 59.7 / PG2) (Mycoplasma agalactiae).